The primary structure comprises 245 residues: Protein-glutamine gamma-glutamyltransferase (245 aa).

This sequence belongs to the bacillus TGase family.

The enzyme catalyses L-glutaminyl-[protein] + L-lysyl-[protein] = [protein]-L-lysyl-N(6)-5-L-glutamyl-[protein] + NH4(+). In terms of biological role, probably plays a role in the assembly of the spore coat proteins by catalyzing epsilon-(gamma-glutamyl)lysine cross-links. In wild-type spores at 37 degrees Celsius, tgl mediates the cross-linking of GerQ in higher molecular mass forms, probably in cooperation with YabG. The protein is Protein-glutamine gamma-glutamyltransferase (tgl) of Bacillus subtilis (strain 168).